The primary structure comprises 456 residues: Gamma-aminobutyric acid receptor subunit alpha-1 (456 aa).

The signal sequence occupies residues 1-27 (MRKSPGLSDYLWAWILLLSTLTGRSYG). At 28-253 (QPSLQDELKD…FHLKRKIGYF (226 aa)) the chain is on the extracellular side. N38 carries N-linked (GlcNAc...) asparagine glycosylation. R94 serves as a coordination point for 4-aminobutanoate. An N-linked (GlcNAc...) asparagine glycan is attached at N138. T157 provides a ligand contact to 4-aminobutanoate. The cysteines at positions 166 and 180 are disulfide-linked. A helical membrane pass occupies residues 254 to 274 (VIQTYLPCIMTVILSQVSFWL). Over 275–279 (NRESV) the chain is Cytoplasmic. Residues 280 to 301 (PARTVFGVTTVLTMTTLSISAR) form a helical membrane-spanning segment. Residues 302-311 (NSLPKVAYAT) are Extracellular-facing. Residues 312 to 333 (AMDWFIAVCYAFVFSALIEFAT) form a helical membrane-spanning segment. Over 334–421 (VNYFTKRGYA…TFNSVSKIDR (88 aa)) the chain is Cytoplasmic. The helical transmembrane segment at 422-441 (LSRIAFPLLFGIFNLVYWAT) threads the bilayer. Residues 442 to 456 (YLNREPQLKAPTPHQ) lie on the Extracellular side of the membrane.

Belongs to the ligand-gated ion channel (TC 1.A.9) family. Gamma-aminobutyric acid receptor (TC 1.A.9.5) subfamily. GABRA1 sub-subfamily. As to quaternary structure, heteropentamer, formed by a combination of alpha (GABRA1-6), beta (GABRB1-3), gamma (GABRG1-3), delta (GABRD), epsilon (GABRE), rho (GABRR1-3), pi (GABRP) and theta (GABRQ) subunits, each subunit exhibiting distinct physiological and pharmacological properties. Interacts with UBQLN1. Interacts with TRAK1. Interacts with KIF21B. Identified in a complex of 720 kDa composed of LHFPL4, NLGN2, GABRA1, GABRB2, GABRG2 and GABRB3. Interacts with LHFPL4. Interacts with NLGN2. Interacts with SHISA7; interaction leads to the regulation of GABA(A) receptor trafficking, channel deactivation kinetics and pharmacology.

It is found in the postsynaptic cell membrane. The protein resides in the cell membrane. The protein localises to the cytoplasmic vesicle membrane. The enzyme catalyses chloride(in) = chloride(out). With respect to regulation, allosterically activated by benzodiazepines, the neuroanesthetic alphaxalone and pentobarbital. Inhibited by the antagonist bicuculline. Potentiated by histamine. Its function is as follows. Alpha subunit of the heteropentameric ligand-gated chloride channel gated by gamma-aminobutyric acid (GABA), a major inhibitory neurotransmitter in the brain. GABA-gated chloride channels, also named GABA(A) receptors (GABAAR), consist of five subunits arranged around a central pore and contain GABA active binding site(s) located at the alpha and beta subunit interface(s). When activated by GABA, GABAARs selectively allow the flow of chloride anions across the cell membrane down their electrochemical gradient. Alpha-1/GABRA1-containing GABAARs are largely synaptic. Chloride influx into the postsynaptic neuron following GABAAR opening decreases the neuron ability to generate a new action potential, thereby reducing nerve transmission. GABAARs containing alpha-1 and beta-2 or -3 subunits exhibit synaptogenic activity; the gamma-2 subunit being necessary but not sufficient to induce rapid synaptic contacts formation. GABAARs function also as histamine receptor where histamine binds at the interface of two neighboring beta subunits and potentiates GABA response. GABAARs containing alpha, beta and epsilon subunits also permit spontaneous chloride channel activity while preserving the structural information required for GABA-gated openings. Alpha-1-mediated plasticity in the orbitofrontal cortex regulates context-dependent action selection. Together with rho subunits, may also control neuronal and glial GABAergic transmission in the cerebellum. In Macaca fascicularis (Crab-eating macaque), this protein is Gamma-aminobutyric acid receptor subunit alpha-1 (GABRA1).